A 579-amino-acid chain; its full sequence is Keratinocyte proline-rich protein (579 aa).

Position 394 is a phosphoserine (Ser394). Residues 526–579 form a disordered region; the sequence is EAPYCGPSSYNQGQESGAGCGPGDVFPERRGQDGHGDQGNAFAGVKGEAKSAYF. Over residues 551 to 561 the composition is skewed to basic and acidic residues; it reads FPERRGQDGHG.

As to expression, expressed in the upper layer of epidermis and psoriasis (at protein level). Expressed in the upper layer of epidermis and psoriasis.

It localises to the cytoplasm. The protein is Keratinocyte proline-rich protein (KPRP) of Homo sapiens (Human).